The primary structure comprises 581 residues: Estrogen receptor (581 aa).

The tract at residues 1-144 is modulating; the sequence is MYPEDSRVSG…GFEMAKEMRF (144 aa). 2 disordered regions span residues 45 to 66 and 99 to 123; these read APLDAHGPPSDGSLQSLGSGPN and RSSVPSSQHSVSREDQCGTSDDSYS. A compositionally biased stretch (polar residues) spans 56-66; it reads GSLQSLGSGPN. The nuclear receptor DNA-binding region spans 142-217; that stretch reads MRFCAVCSDY…VGMMKGGVRK (76 aa). NR C4-type zinc fingers lie at residues 145–165 and 181–200; these read CAVCSDYASGYHYGVWSCEGC and CPATNQCTIDRNRRKSCQAC. The tract at residues 211–272 is hinge; sequence MKGGVRKDRG…GGGKSSVISM (62 aa). Over residues 216–246 the composition is skewed to basic and acidic residues; the sequence is RKDRGRVLRRDKRRTGTSDRDKASKGLEHRT. A disordered region spans residues 216 to 269; that stretch reads RKDRGRVLRRDKRRTGTSDRDKASKGLEHRTAPPQDRRKHISSSAGGGGGKSSV. The NR LBD domain occupies 273 to 509; sequence PPDQVLLLLR…DLLLEMLDAH (237 aa). Over residues 514–528 the composition is skewed to basic and acidic residues; the sequence is PDRPAETWSQADREP. A disordered region spans residues 514 to 581; sequence PDRPAETWSQ…VHPHPMKPTE (68 aa). Residues 572–581 are compositionally biased toward basic residues; that stretch reads VHPHPMKPTE.

The protein belongs to the nuclear hormone receptor family. NR3 subfamily. As to quaternary structure, binds DNA as a homodimer. Can form a heterodimer with ER-beta.

It is found in the nucleus. In terms of biological role, the steroid hormones and their receptors are involved in the regulation of eukaryotic gene expression and affect cellular proliferation and differentiation in target tissues. The protein is Estrogen receptor (esr1) of Sparus aurata (Gilthead sea bream).